Here is a 331-residue protein sequence, read N- to C-terminus: Geranylgeranyl pyrophosphate synthase dpmaD (331 aa).

The isopentenyl diphosphate site is built by lysine 53, arginine 56, and histidine 85. Residues aspartate 92 and aspartate 96 each contribute to the Mg(2+) site. Residue arginine 101 coordinates dimethylallyl diphosphate. An isopentenyl diphosphate-binding site is contributed by arginine 102. 3 residues coordinate dimethylallyl diphosphate: lysine 179, threonine 180, and glutamine 213. Aspartate 216 provides a ligand contact to Mg(2+). Residues asparagine 220, lysine 230, and lysine 240 each contribute to the dimethylallyl diphosphate site.

It belongs to the FPP/GGPP synthase family. It depends on Mg(2+) as a cofactor.

It carries out the reaction isopentenyl diphosphate + dimethylallyl diphosphate = (2E)-geranyl diphosphate + diphosphate. The catalysed reaction is isopentenyl diphosphate + (2E)-geranyl diphosphate = (2E,6E)-farnesyl diphosphate + diphosphate. It catalyses the reaction isopentenyl diphosphate + (2E,6E)-farnesyl diphosphate = (2E,6E,10E)-geranylgeranyl diphosphate + diphosphate. Its pathway is secondary metabolite biosynthesis; terpenoid biosynthesis. Functionally, geranylgeranyl pyrophosphate synthase; part of the gene cluster that mediates the biosynthesis of the diterpenoid pyrones subglutinols A and B. The first step of the pathway is the synthesis of the alpha-pyrone moiety by the polyketide synthase dpmaA via condensation of one acetyl-CoA starter unit with 3 malonyl-CoA units and 2 methylations. The alpha-pyrone is then combined with geranylgeranyl pyrophosphate (GGPP) formed by the GGPP synthase dpmaD through the action of the prenyltransferase dpmaC to yield a linear alpha-pyrone diterpenoid. Subsequent steps in the diterpenoid pyrone biosynthetic pathway involve the decalin core formation, which is initiated by the epoxidation of the C10-C11 olefin by the FAD-dependent oxidoreductase dpmaE, and is followed by a cyclization cascade catalyzed by the terpene cyclase dpmaB. The dehydrogenase dpmaF is then involved in tetrahydrofuran (THF) ring formation at the C5 unit to complete the formation of subglutinols A and B. The protein is Geranylgeranyl pyrophosphate synthase dpmaD of Metarhizium anisopliae (Entomophthora anisopliae).